A 195-amino-acid chain; its full sequence is Probable DNA-directed RNA polymerase subunit delta (195 aa).

One can recognise an HTH HARE-type domain in the interval 14–83 (LSMIEVARAI…GDNKWGLRSW (70 aa)). 2 stretches are compositionally biased toward acidic residues: residues 119-138 (GDED…DSYE) and 145-195 (YDDE…GEEE). A disordered region spans residues 119 to 195 (GDEDAIDYSD…SDDDAEGEEE (77 aa)).

The protein belongs to the RpoE family. RNAP is composed of a core of 2 alpha, a beta and a beta' subunits. The core is associated with a delta subunit and one of several sigma factors.

Participates in both the initiation and recycling phases of transcription. In the presence of the delta subunit, RNAP displays an increased specificity of transcription, a decreased affinity for nucleic acids, and an increased efficiency of RNA synthesis because of enhanced recycling. This is Probable DNA-directed RNA polymerase subunit delta from Streptococcus gordonii (strain Challis / ATCC 35105 / BCRC 15272 / CH1 / DL1 / V288).